A 407-amino-acid polypeptide reads, in one-letter code: Magnesium-protoporphyrin IX monomethyl ester [oxidative] cyclase 1, chloroplastic (407 aa).

Residues Met1–Ala10 show a composition bias toward polar residues. The segment at Met1–Pro28 is disordered.

It belongs to the AcsF family. The cofactor is Fe cation.

It localises to the plastid. The protein localises to the chloroplast thylakoid membrane. The enzyme catalyses Mg-protoporphyrin IX 13-monomethyl ester + 3 NADPH + 3 O2 + 2 H(+) = 3,8-divinyl protochlorophyllide a + 3 NADP(+) + 5 H2O. It participates in porphyrin-containing compound metabolism; chlorophyll biosynthesis. In terms of biological role, catalyzes the formation of the isocyclic ring in chlorophyll biosynthesis under oxygen- and copper-deficient conditions. Mediates the cyclase reaction, which results in the formation of divinylprotochlorophyllide (Pchlide) characteristic of all chlorophylls from magnesium-protoporphyrin IX 13-monomethyl ester (MgPMME). In Chlamydomonas reinhardtii (Chlamydomonas smithii), this protein is Magnesium-protoporphyrin IX monomethyl ester [oxidative] cyclase 1, chloroplastic (CRD1).